Here is a 444-residue protein sequence, read N- to C-terminus: Protein kinase C and casein kinase substrate in neurons protein 1 (444 aa).

Phosphoserine occurs at positions 2 and 79. The F-BAR domain maps to 13 to 283 (EETTDSFWEV…AIRGADAQED (271 aa)). Residues 26–275 (KRTVKRIDDG…HVYRELEQAI (250 aa)) are a coiled coil. Disordered stretches follow at residues 173-194 (REMN…LQDK) and 309-386 (LPHT…DDSK). The residue at position 184 (T184) is a Phosphothreonine. The span at 314–324 (TKKEKQPKKAE) shows a compositional bias: basic and acidic residues. The segment covering 329 to 351 (TNATGAVESTSQAGDRGSVSSYD) has biased composition (polar residues). Phosphoserine occurs at positions 346, 348, 349, 361, and 365. An SH3 domain is found at 385–444 (SKGVRVRALYDYDGQEQDELSFKAGDELTKLGEEDEQGWCRGRLDSGQLGLYPANYVEAI). Phosphotyrosine is present on Y394. Residues S405 and S430 each carry the phosphoserine modification.

Belongs to the PACSIN family. As to quaternary structure, homodimer. May form heterooligomers with other PACSINs. Interacts with both COBL and DBNL. Identified in a complex composed of COBL, PACSIN1 and WASL. Interacts (via SH3 domain) with SYNJ1 and WASL. Interacts (via SH3 domain) with DNM1; the interaction is reduced by DNM1 phosphorylation. Interacts with DNM2 and DNM3. Interacts with MAPT. Interacts with EHD1 and EHD3. Interacts with TRPV4. Phosphorylated by casein kinase 2 (CK2) and protein kinase C (PKC).

The protein resides in the cytoplasm. It is found in the cell projection. The protein localises to the synapse. It localises to the synaptosome. Its subcellular location is the ruffle membrane. The protein resides in the membrane. It is found in the cytoplasmic vesicle membrane. The protein localises to the cytosol. It localises to the cell membrane. In terms of biological role, binds to membranes via its F-BAR domain and mediates membrane tubulation. Plays a role in the reorganization of the microtubule cytoskeleton via its interaction with MAPT; this decreases microtubule stability and inhibits MAPT-induced microtubule polymerization. Plays a role in cellular transport processes by recruiting DNM1, DNM2 and DNM3 to membranes. Plays a role in the reorganization of the actin cytoskeleton and in neuron morphogenesis via its interaction with COBL and WASL, and by recruiting COBL to the cell cortex. Plays a role in the regulation of neurite formation, neurite branching and the regulation of neurite length. Required for normal synaptic vesicle endocytosis; this process retrieves previously released neurotransmitters to accommodate multiple cycles of neurotransmission. Required for normal excitatory and inhibitory synaptic transmission. The polypeptide is Protein kinase C and casein kinase substrate in neurons protein 1 (Pacsin1) (Pongo abelii (Sumatran orangutan)).